The primary structure comprises 281 residues: Pantothenate synthetase (281 aa).

Residue 30–37 (MGNLHQGH) coordinates ATP. The active-site Proton donor is the H37. Position 61 (Q61) interacts with (R)-pantoate. Residue Q61 coordinates beta-alanine. ATP is bound at residue 149–152 (GNKD). Q155 is a binding site for (R)-pantoate. ATP contacts are provided by residues I178 and 186–189 (MSSR).

The protein belongs to the pantothenate synthetase family. In terms of assembly, homodimer.

It is found in the cytoplasm. The enzyme catalyses (R)-pantoate + beta-alanine + ATP = (R)-pantothenate + AMP + diphosphate + H(+). It participates in cofactor biosynthesis; (R)-pantothenate biosynthesis; (R)-pantothenate from (R)-pantoate and beta-alanine: step 1/1. Functionally, catalyzes the condensation of pantoate with beta-alanine in an ATP-dependent reaction via a pantoyl-adenylate intermediate. The sequence is that of Pantothenate synthetase from Shewanella baltica (strain OS185).